Consider the following 183-residue polypeptide: TATA-box-binding protein (183 aa).

A run of 2 repeats spans residues 8 to 84 (VENI…VDKI) and 99 to 175 (IQNI…KERL).

This sequence belongs to the TBP family.

General factor that plays a role in the activation of archaeal genes transcribed by RNA polymerase. Binds specifically to the TATA box promoter element which lies close to the position of transcription initiation. The sequence is that of TATA-box-binding protein from Methanosphaera stadtmanae (strain ATCC 43021 / DSM 3091 / JCM 11832 / MCB-3).